We begin with the raw amino-acid sequence, 82 residues long: Ubiquinol-cytochrome-c reductase complex assembly factor 3 (82 aa).

Over 1–6 (METVRR) the chain is Mitochondrial matrix. Residues 7–29 (IVKGTLLLGFCTGIGGDLWVLVA) traverse the membrane as a helical segment. Residues 30-82 (PGQERRLEMRMNYPEANPPMLAEAHKRNEMVLKVIEESAKTNENMARRSPWSS) lie on the Mitochondrial intermembrane side of the membrane.

This sequence belongs to the UQCC3 family. Associates with the ubiquinol-cytochrome c reductase complex (mitochondrial respiratory chain complex III or cytochrome b-c1 complex).

The protein resides in the mitochondrion inner membrane. Its function is as follows. Required for the assembly of the ubiquinol-cytochrome c reductase complex (mitochondrial respiratory chain complex III or cytochrome b-c1 complex), mediating cytochrome b recruitment and probably stabilization within the complex. Thereby, plays an important role in ATP production by mitochondria. Cardiolipin-binding protein, it may also control the cardiolipin composition of mitochondria membranes and their morphology. This chain is Ubiquinol-cytochrome-c reductase complex assembly factor 3, found in Xenopus laevis (African clawed frog).